A 321-amino-acid polypeptide reads, in one-letter code: NADPH-dependent codeinone reductase 1-2 (321 aa).

NADPH-binding residues include T27 and D51. Catalysis depends on proton donor residues Y56 and H119. H119 serves as a coordination point for substrate. The NADPH site is built by S165, Q187, S214, L216, S264, and R269. The disordered stretch occupies residues 299-321 (SADFLLSPTGPFKTEEEFWDEKD).

The protein belongs to the aldo/keto reductase family. In terms of tissue distribution, latex secreting cells (laticifer cells). Expressed constitutively in all organs with highest levels in capsules. Restricted to the parietal region of sieve elements adjacent or proximal to laticifers in roots, stems, leaves and carpels.

The protein localises to the cytoplasm. It localises to the cytosol. The catalysed reaction is codeine + NADP(+) = codeinone + NADPH + H(+). It carries out the reaction neopine + NADP(+) = neopinone + NADPH + H(+). The enzyme catalyses morphine + NADP(+) = morphinone + NADPH + H(+). It catalyses the reaction neomorphine + NADP(+) = neomorphinone + NADPH + H(+). Its pathway is alkaloid biosynthesis; morphine biosynthesis. Functionally, NADPH-dependent codeinone reductase involved in biosynthesis of morphinan-type benzylisoquinoline and opiate alkaloids natural products. Reduces codeinone to codeine in the penultimate step in morphine biosynthesis. Can use morphinone, hydrocodone and hydromorphone as substrate during reductive reaction with NADPH as cofactor, and morphine and dihydrocodeine as substrate during oxidative reaction with NADP as cofactor. Converts morphinone to morphine, and neomorphinone to neomorphine. Reduces irreversibly neopinone, a spontaneous isomer of codeinone, to neopine; in planta, neopine levels are limited to low levels. The polypeptide is NADPH-dependent codeinone reductase 1-2 (Papaver somniferum (Opium poppy)).